The following is an 85-amino-acid chain: UPF0473 protein CLK_1946 (85 aa).

This sequence belongs to the UPF0473 family.

This chain is UPF0473 protein CLK_1946, found in Clostridium botulinum (strain Loch Maree / Type A3).